The sequence spans 835 residues: Beta-galactosidase (835 aa).

Positions 1-22 (MGFWMAMLLMLLLCLWVSCGIA) are cleaved as a signal peptide. The active-site Proton donor is the glutamate 180. Residue glutamate 249 is the Nucleophile of the active site. The 87-residue stretch at 749–835 (RPLRPKAHLK…KKLSVEAICS (87 aa)) folds into the SUEL-type lectin domain.

Belongs to the glycosyl hydrolase 35 family.

It catalyses the reaction Hydrolysis of terminal non-reducing beta-D-galactose residues in beta-D-galactosides.. In terms of biological role, involved in cell wall degradation. Degrades polysaccharides containing beta-(1--&gt;4)-linked galactans, acting as an exo-(1--&gt;4)-beta-D-galactanase. The sequence is that of Beta-galactosidase from Solanum lycopersicum (Tomato).